An 85-amino-acid polypeptide reads, in one-letter code: Contulakin-Lt1 (85 aa).

The first 22 residues, 1 to 22 (MRTAYWVMVMMMVGITAPLSEG), serve as a signal peptide directing secretion. Residues 23–60 (RKLNDAIRGLVADYLTPQLLQSLVSAPYPEFQLDDPNL) constitute a propeptide that is removed on maturation. Cysteine 65 and cysteine 70 are joined by a disulfide. A propeptide spanning residues 76-85 (RRRDLKKRNK) is cleaved from the precursor.

It belongs to the conotoxin C superfamily. As to expression, expressed by the venom duct.

It is found in the secreted. Its function is as follows. Acts as an agonist of neurotensin receptors. It binds to human neurotensin type 1 receptor (NTSR1), rat neurotensin types 1 and 2 receptors (NTSR1/NTSR2) and mouse neurotensin type 3 receptor (SORT1). This is Contulakin-Lt1 from Conus litteratus (Lettered cone).